Here is a 405-residue protein sequence, read N- to C-terminus: 8-amino-7-oxononanoate synthase 2 (405 aa).

Arg-20 provides a ligand contact to substrate. Residue 116–117 (GY) participates in pyridoxal 5'-phosphate binding. His-141 is a binding site for substrate. The pyridoxal 5'-phosphate site is built by Ser-187, His-215, and Thr-243. The residue at position 246 (Lys-246) is an N6-(pyridoxal phosphate)lysine. Thr-369 lines the substrate pocket.

Belongs to the class-II pyridoxal-phosphate-dependent aminotransferase family. BioF subfamily. In terms of assembly, homodimer. Requires pyridoxal 5'-phosphate as cofactor.

It carries out the reaction 6-carboxyhexanoyl-[ACP] + L-alanine + H(+) = (8S)-8-amino-7-oxononanoate + holo-[ACP] + CO2. It functions in the pathway cofactor biosynthesis; biotin biosynthesis. Catalyzes the decarboxylative condensation of pimeloyl-[acyl-carrier protein] and L-alanine to produce 8-amino-7-oxononanoate (AON), [acyl-carrier protein], and carbon dioxide. This chain is 8-amino-7-oxononanoate synthase 2, found in Polaromonas sp. (strain JS666 / ATCC BAA-500).